Reading from the N-terminus, the 250-residue chain is Histone H1.3 (250 aa).

Disordered stretches follow at residues 17–53 and 104–250; these read AASG…QMVD and QTKG…ATKK. Positions 27 to 42 are enriched in low complexity; sequence KKAAATPKSKKSTAAP. Residues 44–118 enclose the H15 domain; it reads SHPPTQQMVD…GASGSFKLSR (75 aa). Over residues 120 to 133 the composition is skewed to basic and acidic residues; sequence AKKDAKPKASAVEK. Positions 138-161 are enriched in low complexity; that stretch reads VNASAAAATKRSSSTSTTKKAAGA. A compositionally biased stretch (basic and acidic residues) spans 174–191; the sequence is KNVEKKKADKEKAKDAKK. The segment covering 192–234 has biased composition (low complexity); sequence TGTIKAKLTTAKAKSSATKPKTPKPKTTSAKPKKVVSATTPKK. A compositionally biased stretch (basic residues) spans 235 to 250; it reads TAVKKPKAKTASATKK.

Belongs to the histone H1/H5 family.

Its subcellular location is the nucleus. It localises to the chromosome. Functionally, histones H1 are necessary for the condensation of nucleosome chains into higher-order structures. This Drosophila virilis (Fruit fly) protein is Histone H1.3 (His1.3).